A 319-amino-acid chain; its full sequence is Ferrochelatase (319 aa).

Residues His-193 and Glu-274 each coordinate Fe cation.

Belongs to the ferrochelatase family.

The protein localises to the cytoplasm. It catalyses the reaction heme b + 2 H(+) = protoporphyrin IX + Fe(2+). It functions in the pathway porphyrin-containing compound metabolism; protoheme biosynthesis; protoheme from protoporphyrin-IX: step 1/1. Catalyzes the ferrous insertion into protoporphyrin IX. The protein is Ferrochelatase of Actinobacillus pleuropneumoniae serotype 3 (strain JL03).